The sequence spans 143 residues: Large ribosomal subunit protein uL15 (143 aa).

Residues 1-48 are disordered; it reads MRLNTISPSKGAKHSSKRLGRGIGSGLGKTSGRGHKGQKARSGCSIHR. The segment covering 11 to 20 has biased composition (basic residues); that stretch reads GAKHSSKRLG. Residues 21-31 are compositionally biased toward gly residues; the sequence is RGIGSGLGKTS.

Belongs to the universal ribosomal protein uL15 family. Part of the 50S ribosomal subunit.

Functionally, binds to the 23S rRNA. This chain is Large ribosomal subunit protein uL15, found in Baumannia cicadellinicola subsp. Homalodisca coagulata.